Consider the following 761-residue polypeptide: 5-methyltetrahydropteroyltriglutamate--homocysteine methyltransferase (761 aa).

5-methyltetrahydropteroyltri-L-glutamate is bound by residues 16–19 (RELK) and lysine 118. L-homocysteine-binding positions include 436–438 (IGS) and glutamate 489. Residues 436 to 438 (IGS) and glutamate 489 contribute to the L-methionine site. 5-methyltetrahydropteroyltri-L-glutamate contacts are provided by residues 520 to 521 (RC) and tryptophan 566. Residue aspartate 604 coordinates L-homocysteine. L-methionine is bound at residue aspartate 604. Glutamate 610 is a binding site for 5-methyltetrahydropteroyltri-L-glutamate. Residues histidine 646, cysteine 648, and glutamate 670 each contribute to the Zn(2+) site. The Proton donor role is filled by histidine 699. A Zn(2+)-binding site is contributed by cysteine 731.

It belongs to the vitamin-B12 independent methionine synthase family. Requires Zn(2+) as cofactor.

The catalysed reaction is 5-methyltetrahydropteroyltri-L-glutamate + L-homocysteine = tetrahydropteroyltri-L-glutamate + L-methionine. It participates in amino-acid biosynthesis; L-methionine biosynthesis via de novo pathway; L-methionine from L-homocysteine (MetE route): step 1/1. Catalyzes the transfer of a methyl group from 5-methyltetrahydrofolate to homocysteine resulting in methionine formation. The sequence is that of 5-methyltetrahydropteroyltriglutamate--homocysteine methyltransferase from Vibrio cholerae serotype O1 (strain ATCC 39315 / El Tor Inaba N16961).